A 156-amino-acid chain; its full sequence is Small ribosomal subunit protein uS7 (156 aa).

Belongs to the universal ribosomal protein uS7 family. Part of the 30S ribosomal subunit. Contacts proteins S9 and S11.

Functionally, one of the primary rRNA binding proteins, it binds directly to 16S rRNA where it nucleates assembly of the head domain of the 30S subunit. Is located at the subunit interface close to the decoding center, probably blocks exit of the E-site tRNA. The polypeptide is Small ribosomal subunit protein uS7 (Oleidesulfovibrio alaskensis (strain ATCC BAA-1058 / DSM 17464 / G20) (Desulfovibrio alaskensis)).